The following is a 689-amino-acid chain: Probable serine/threonine-protein kinase abkC (689 aa).

The segment at asparagine 42–glycine 79 is disordered. Residues tryptophan 257 to lysine 689 enclose the Protein kinase domain. Residues methionine 263–valine 271 and lysine 285 contribute to the ATP site. Aspartate 417 functions as the Proton acceptor in the catalytic mechanism. Residues lysine 652 to lysine 689 are disordered. Over residues asparagine 655–asparagine 683 the composition is skewed to low complexity.

Belongs to the protein kinase superfamily. ADCK protein kinase family.

The polypeptide is Probable serine/threonine-protein kinase abkC (abkC) (Dictyostelium discoideum (Social amoeba)).